Consider the following 412-residue polypeptide: Serine hydroxymethyltransferase (412 aa).

(6S)-5,6,7,8-tetrahydrofolate-binding positions include leucine 117 and 121 to 123 (GHL). Lysine 226 carries the post-translational modification N6-(pyridoxal phosphate)lysine. A (6S)-5,6,7,8-tetrahydrofolate-binding site is contributed by 349–351 (SPF).

The protein belongs to the SHMT family. Homodimer. Pyridoxal 5'-phosphate is required as a cofactor.

It is found in the cytoplasm. The catalysed reaction is (6R)-5,10-methylene-5,6,7,8-tetrahydrofolate + glycine + H2O = (6S)-5,6,7,8-tetrahydrofolate + L-serine. It participates in one-carbon metabolism; tetrahydrofolate interconversion. It functions in the pathway amino-acid biosynthesis; glycine biosynthesis; glycine from L-serine: step 1/1. Catalyzes the reversible interconversion of serine and glycine with tetrahydrofolate (THF) serving as the one-carbon carrier. This reaction serves as the major source of one-carbon groups required for the biosynthesis of purines, thymidylate, methionine, and other important biomolecules. Also exhibits THF-independent aldolase activity toward beta-hydroxyamino acids, producing glycine and aldehydes, via a retro-aldol mechanism. The chain is Serine hydroxymethyltransferase from Oleidesulfovibrio alaskensis (strain ATCC BAA-1058 / DSM 17464 / G20) (Desulfovibrio alaskensis).